The chain runs to 1742 residues: MQAMDPASRGFYEEDGKDLDFYDFEPLPTLPEDEENVSLADILSLRDRGLSEQEAWAVCLECSLSMRSVAHAAIFQTLCITPDTLAFNTSGNVCFMEQLSDDPEGAFVPPEFDLTGNTFEAHIYSLGATLKAALEYVPEPELEPKLSTDLEGLLSQMQAEDPRERPDLASIIALCEEKMQPVSSCRLCRSLSAIGRRVLSIESFGAFQELSENTWRGRPAPRNVGPKKMPGDLSTDPEALFPSKGLLQPPASRDAEQEAGQRPRAPSPKPLLSAPVRNGENPGQEGLADLVLDARCPLGELDRDNLRRSRLKKAQTFPRLLQESTETSTLCLSLNGSRNQLAISEFFPPDPRKLFLEGKNGLSGFKTQSKSRLWPEQEPGVQLDKTPGAGRNPHRSPGASGQLEASSPSQGSVEYKPSPSPVDAGDSDHEGHIPRSEEKIPEESRQPGSTATEQSLSLKDLLSKLGRPFREYELWALCLSCLSTLQTHKEHPAHLCLDNVLVAEDGTVFFGPPPANGAYNSLFLAPEVSEEKLVTEKASVYCVAAVLWTAAKFSVPRDHKLALPRRLKTLLLDMARRHASERPSAAEAIKVCSSYLLQRGMDSSKILAHLRASTCKVHPEEETIGLQNAFSVVELKSTTAPAPESSPGFLQVSNDTKLVAVPGPVPGLPPCCKEACELPAAFTSEATHFKPIVLAQDASVTRDQLALPSESNEKPKEGSGHLDREGTRKQAALELVEATDLKMSNQLSPGPELQGATPDPDGDSGSPSSATECSCPHGPALVTQQKGTSGTPSSPASSLPPEHRPDGEGPLGTTVLPGPTSASQGSRHPCKPPRGKAAASPSSPRGSDGHPEKPRPADRKLCPSSVDTSSPPKMTACPSLQEAMRLIQEEFAFDGYMDNGLEALIMGEYIYALKDLTFATFCGAISEKFCDLYWDEQLLKNLFKVVNGPASPSESTSEEPGSQPEHSPSRCSLSSKRPSLHGLGKEKPATTWGSGGPCSPTALSDIDSDTLSQGNFEVGFRSQKSIKVTREQQPEAEVGGQPGPSQDSTSHASDTVARLARSEDGGPAGSPGASDFQNCSPGWSSAFYEADCFGADVYNYVKDLERQKTNGHTELEAQSPELEQQLMIEKRNYRKTLKFYQKLLQKEKRNKGSEVRTMLSKLRGQLDEMKSKVQFLSLVKKYLQVMYAERWGLEPCALPVIVNIAAAPCDTLDFSPLDESSSLIFYNVNKHPGSGRQKKARILQAGTPLGLMAYLYSSDAFLEGYVQQFLYTFRYFCTPHDFLHFLLDRISSTLSRAHQDPTSTFTKIYRRSLCVLQAWVEDCYTVDFIRNAGLLGQLEDFISSKILPLDGTAEHLLALLEVGTERRADSASRGADLEDPKEAEEDTRPFNALCKRFSEDGITRKSFSWRLPRGNGLVLPHHKERQYTIASALPKPCFFEDFYGPYAKASEKGPYFLTEYSTNQLFTQLTLLQQELFQKCHPVHFLNSRALGVMDKSAAIPKASSSESLSAKTCSLFLPNYVQDKYLLQLLRNADDVSTWVAAEIVTSHTSKLQVNLLSKFLLIAKSCYEQRNFATAMQILGGLEHLAVRQSPAWRILPAKIAEVMEELKAVEVFLKSDSLCLMEGRRFRAQPTLPSAHLLAMHIQQLETGGFTMTNGAHRWSKLRNIAKVASQVHAFQENPYTFSPDPKLQAHLKQRIARFSGADVSILAADNRANFHQIPGEKHSRKIQDKLRRMKATFQ.

Positions 37–217 (VSLADILSLR…QELSENTWRG (181 aa)) constitute a KIND 1 domain. Disordered regions lie at residues 215–288 (WRGR…EGLA) and 365–455 (FKTQ…TEQS). A Phosphoserine modification is found at Ser267. Residues 403 to 412 (LEASSPSQGS) show a composition bias toward polar residues. Positions 426–445 (DSDHEGHIPRSEEKIPEESR) are enriched in basic and acidic residues. One can recognise a KIND 2 domain in the interval 456–620 (LSLKDLLSKL…RASTCKVHPE (165 aa)). 4 disordered regions span residues 703-727 (DQLA…REGT), 744-876 (SNQL…KMTA), 948-1006 (GPAS…LSDI), and 1028-1076 (VTRE…ASDF). Residues 711–727 (SNEKPKEGSGHLDREGT) show a composition bias toward basic and acidic residues. Low complexity predominate over residues 755–771 (GATPDPDGDSGSPSSAT). Over residues 782-791 (VTQQKGTSGT) the composition is skewed to polar residues. Residues 847-861 (SDGHPEKPRPADRKL) are compositionally biased toward basic and acidic residues. Low complexity predominate over residues 949 to 965 (PASPSESTSEEPGSQPE). Ser951 bears the Phosphoserine mark. Polar residues predominate over residues 1043 to 1053 (GPSQDSTSHAS). Positions 1112–1177 (HTELEAQSPE…EMKSKVQFLS (66 aa)) form a coiled coil. In terms of domain architecture, N-terminal Ras-GEF spans 1239-1367 (KARILQAGTP…ALLEVGTERR (129 aa)). A Ras-GEF domain is found at 1461-1712 (STNQLFTQLT…SGADVSILAA (252 aa)).

Interacts (via KIND2) with MAP2; the interaction enhances MAP2 phosphorylation and localizes KNDC1 to dendrites. Highly expressed in the brain and at low levels in the ovary. In the brain it is most prominently expressed in the cerebellum where it is restricted to the granular Purkinje cell layer.

The protein localises to the cell projection. It localises to the dendrite. The protein resides in the perikaryon. RAS-Guanine nucleotide exchange factor (GEF) that controls the negative regulation of neuronal dendrite growth by mediating a signaling pathway linking RAS and MAP2. May be involved in cellular senescence. The polypeptide is Kinase non-catalytic C-lobe domain-containing protein 1 (Mus musculus (Mouse)).